We begin with the raw amino-acid sequence, 203 residues long: Ribonuclease HII (203 aa).

The RNase H type-2 domain occupies 16-203; sequence ENIACCDEVG…HRKSFLNKIL (188 aa). The a divalent metal cation site is built by aspartate 22, glutamate 23, and aspartate 120.

It belongs to the RNase HII family. The cofactor is Mn(2+). Requires Mg(2+) as cofactor.

Its subcellular location is the cytoplasm. The enzyme catalyses Endonucleolytic cleavage to 5'-phosphomonoester.. Functionally, endonuclease that specifically degrades the RNA of RNA-DNA hybrids. The polypeptide is Ribonuclease HII (Alkaliphilus oremlandii (strain OhILAs) (Clostridium oremlandii (strain OhILAs))).